The following is a 376-amino-acid chain: Pregnancy-associated glycoprotein 2 (376 aa).

The N-terminal stretch at 1-15 is a signal peptide; sequence MKWLVLLGLVALSEC. Residues Asn51 and Asn71 are each glycosylated (N-linked (GlcNAc...) asparagine). Positions 68 to 373 constitute a Peptidase A1 domain; that stretch reads YVGNITIGTP…DRKNRRIGLA (306 aa). Residue Asp86 is part of the active site. Residues Cys99 and Cys104 are joined by a disulfide bond. N-linked (GlcNAc...) asparagine glycans are attached at residues Asn114, Asn248, and Asn252. A disulfide bond links Cys258 and Cys262. Asp267 is an active-site residue. Cysteines 300 and 333 form a disulfide. An N-linked (GlcNAc...) asparagine glycan is attached at Asn343.

Belongs to the peptidase A1 family. Post-translationally, N-Glycosylated; the glycans terminate in either N-acetyl-galactosamine (GalNAc) or N-acetyllactosamine. Terminal GalNAc on Asn-linked glycans is greatly reduced prior to parturition while lactosamine-type N-glycans remain unaltered. In terms of tissue distribution, trophoblast and placental tissue. Localized to both the mononucleate and binucleate cells of the trophectoderm.

The protein localises to the secreted. Its subcellular location is the extracellular space. In terms of biological role, PAG2 or a processed derivative of this molecule might represent a factor that binds the LH receptor. This chain is Pregnancy-associated glycoprotein 2 (PAG2), found in Bos taurus (Bovine).